The following is a 384-amino-acid chain: Putative F-box/kelch-repeat protein At3g27910 (384 aa).

Positions 27 to 79 constitute an F-box domain; that stretch reads SPTSLPLPDEIIVNCFAYIPRCDYPSLSLVSKTFNRLITSIELNIVRSLFQRT. Kelch repeat units lie at residues 138–184, 185–235, 237–274, and 275–323; these read KIYV…IVDG, KIYV…VMNK, IYIMDRGNGIVFDPKKGVWERDFLLDRDWVVGSCVIDN, and MLYT…MANH.

This is Putative F-box/kelch-repeat protein At3g27910 from Arabidopsis thaliana (Mouse-ear cress).